The chain runs to 441 residues: tRNA(Ile)-lysidine synthase (441 aa).

Position 28–33 (28–33 (SGGTDS)) interacts with ATP.

Belongs to the tRNA(Ile)-lysidine synthase family.

The protein resides in the cytoplasm. The enzyme catalyses cytidine(34) in tRNA(Ile2) + L-lysine + ATP = lysidine(34) in tRNA(Ile2) + AMP + diphosphate + H(+). Its function is as follows. Ligates lysine onto the cytidine present at position 34 of the AUA codon-specific tRNA(Ile) that contains the anticodon CAU, in an ATP-dependent manner. Cytidine is converted to lysidine, thus changing the amino acid specificity of the tRNA from methionine to isoleucine. This Orientia tsutsugamushi (strain Boryong) (Rickettsia tsutsugamushi) protein is tRNA(Ile)-lysidine synthase.